Here is a 770-residue protein sequence, read N- to C-terminus: Amyloid-beta precursor protein (770 aa).

The signal sequence occupies residues 1–17 (MLPSLALLLLTTWTARA). At 18–701 (LEVPTDGNAG…AEDVGSNKGA (684 aa)) the chain is on the extracellular side. Residues 28-123 (LLAEPQIAMF…PYRCLVGEFV (96 aa)) are GFLD subdomain. In terms of domain architecture, E1 spans 28–189 (LLAEPQIAMF…RGVEFVCCPL (162 aa)). Intrachain disulfides connect Cys38–Cys62, Cys73–Cys117, Cys98–Cys105, Cys133–Cys187, Cys144–Cys174, and Cys158–Cys186. A heparin-binding site is contributed by 96–110 (NWCKRSRKQCKTHPH). The cuBD subdomain stretch occupies residues 131-189 (DKCKFLHQERMDVCETHLHWHTVAKETCSEKSTNLHDYGMLLPCGIDKFRGVEFVCCPL). Residues 135 to 155 (FLHQERMDVCETHLHWHTVAK) are copper-binding. Cu(2+) contacts are provided by His147, His151, and Tyr168. Residues 181 to 188 (GVEFVCCP) are zinc-binding. The Zn(2+) site is built by Glu183, Cys186, and Cys187. Positions 196–207 (IDSADAEEDDSD) are enriched in acidic residues. Residues 196 to 281 (IDSADAEEDD…IATTTTTTTE (86 aa)) form a disordered region. Ser198 carries the post-translational modification Phosphoserine; by CK2. The residue at position 206 (Ser206) is a Phosphoserine; by CK1. The residue at position 217 (Tyr217) is a Sulfotyrosine. The segment covering 228–264 (VAEEEEVADVEEEEADDDEDVEDGDEVEEEAEEPYEE) has biased composition (acidic residues). The span at 268–281 (KTTSIATTTTTTTE) shows a compositional bias: low complexity. 3 disulfide bridges follow: Cys291-Cys341, Cys300-Cys324, and Cys316-Cys337. One can recognise a BPTI/Kunitz inhibitor domain in the interval 291-341 (CSEQAETGPCRSMISRWYFDVTEGKCAPFFYGGCGGNRNNFDTEEYCMAVC). Tyr336 carries the sulfotyrosine modification. Positions 344–365 (VMSQNLLKTSGEPVSQGPVKLP) match the OX-2 motif. In terms of domain architecture, E2 spans 374–565 (AVDKYLETPG…EEIQDEVDEL (192 aa)). A heparin-binding region spans residues 391–423 (FQKAKERLEAKHRERMSQVMREWEEAERQAKNL). Ser441 bears the Phosphoserine mark. Positions 491–522 (FNMLKKYVRAEQKDRQHTLKHFEHVRMVDPKK) are heparin-binding. Tyr497 is subject to Phosphotyrosine. The interval 523–540 (AAQIRSQVMTHLRVIYER) is collagen-binding. Asn542 and Asn571 each carry an N-linked (GlcNAc...) asparagine glycan. Ser656 carries O-linked (Xyl...) (chondroitin sulfate) serine glycosylation. Cu(2+) is bound by residues His677, Tyr681, His684, and His685. Zn(2+) contacts are provided by His677, Tyr681, His684, and His685. Residues 695-722 (VGSNKGAIIGLMVGGVVIATVIVITLVM) form an interaction with PSEN1 region. Residues 702–722 (IIGLMVGGVVIATVIVITLVM) form a helical membrane-spanning segment. The Cytoplasmic segment spans residues 723-770 (LKKKQYTSIHHGVVEVDAAVTPEERHLSKMQQNGYENPTYKFFEQMQN). Positions 724–734 (KKKQYTSIHHG) match the Basolateral sorting signal motif. Residue Thr729 is modified to Phosphothreonine. Ser730 carries the post-translational modification Phosphoserine; by APP-kinase I. An interaction with G(o)-alpha region spans residues 732–751 (HHGVVEVDAAVTPEERHLSK). Thr743 carries the post-translational modification Phosphothreonine; by CDK5 and MAPK10. Positions 756 to 770 (GYENPTYKFFEQMQN) are required for the interaction with KIF5B and for anterograde transport in axons. A Phosphotyrosine; by ABL1 modification is found at Tyr757. The YENPXY motif; contains endocytosis signal signature appears at 757 to 762 (YENPTY). Lys763 participates in a covalent cross-link: Glycyl lysine isopeptide (Lys-Gly) (interchain with G-Cter in ubiquitin).

It belongs to the APP family. In terms of assembly, binds, via its C-terminus, to the PID domain of several cytoplasmic proteins, including APBB family members, the APBA family, MAPK8IP1, SHC1 and NUMB and DAB1. Binding to DAB1 inhibits its serine phosphorylation. Interacts (via NPXY motif) with DAB2 (via PID domain); the interaction is impaired by tyrosine phosphorylation of the NPXY motif. Also interacts with GPCR-like protein BPP, APPBP1, IB1, KNS2 (via its TPR domains), APPBP2 (via BaSS) and DDB1. In vitro, it binds MAPT via the MT-binding domains. Associates with microtubules in the presence of ATP and in a kinesin-dependent manner. Interacts, through a C-terminal domain, with GNAO1. Amyloid-beta protein 42 binds CHRNA7 in hippocampal neurons. Amyloid-beta associates with HADH2. Interacts with CPEB1, ANKS1B and AGER. Interacts with ITM2B. Interacts with ITM2C. Interacts with IDE. Can form homodimers; dimerization is enhanced in the presence of Cu(2+) ions. Can form homodimers; this is promoted by heparin binding. Amyloid-beta protein 40 interacts with S100A9. CTF-alpha product of APP interacts with GSAP. Isoform APP695 interacts with SORL1 (via N-terminal ectodomain); this interaction retains APP in the trans-Golgi network and reduces processing into soluble APP-alpha and amyloid-beta peptides. Isoform APP770 interacts with SORL1. The C99 fragment also interacts with SORL1. Interacts with PLD3. Interacts with VDAC1. Interacts with NSG1; could regulate APP processing. Amyloid-beta protein 42 interacts with FPR2. Interacts (via transmembrane region) with PSEN1; the interaction is direct. Interacts with LRRK2. Interacts (via cytoplasmic domain) with KIF5B. Interacts (via C-terminus) with APBB2/FE65L1 (via C-terminus). Interacts (via intracellular domain) with APBB3. Post-translationally, proteolytically processed under normal cellular conditions. Cleavage either by alpha-secretase, beta-secretase or theta-secretase leads to generation and extracellular release of soluble APP peptides, S-APP-alpha and S-APP-beta, and the retention of corresponding membrane-anchored C-terminal fragments, C80, C83 and C99. Subsequent processing of C80 and C83 by gamma-secretase yields P3 peptides. This is the major secretory pathway and is non-amyloidogenic. Alternatively, presenilin/nicastrin-mediated gamma-secretase processing of C99 releases the amyloid-beta proteins, amyloid-beta protein 40 and amyloid-beta protein 42, major components of amyloid plaques, and the cytotoxic C-terminal fragments, gamma-CTF(50), gamma-CTF(57) and gamma-CTF(59). PSEN1 cleavage is more efficient with C83 than with C99 as substrate (in vitro). Amyloid-beta protein 40 and Amyloid-beta protein 42 are cleaved by ACE. Many other minor amyloid-beta peptides, amyloid-beta 1-X peptides, are found in cerebral spinal fluid (CSF) including the amyloid-beta X-15 peptides, produced from the cleavage by alpha-secretase. In terms of processing, proteolytically cleaved by caspases during neuronal apoptosis. Cleavage at Asp-739 by either CASP6, CASP8 or CASP9 results in the production of the neurotoxic C31 peptide and the increased production of amyloid-beta peptides. N- and O-glycosylated. Post-translationally, phosphorylation in the C-terminal on tyrosine, threonine and serine residues is neuron-specific. Phosphorylation can affect APP processing, neuronal differentiation and interaction with other proteins. Phosphorylated on Thr-743 in neuronal cells by Cdc5 kinase and Mapk10, in dividing cells by Cdc2 kinase in a cell-cycle dependent manner with maximal levels at the G2/M phase and, in vitro, by GSK-3-beta. The Thr-743 phosphorylated form causes a conformational change which reduces binding of Fe65 family members. In dopaminergic (DA) neurons, phosphorylation on Thr-743 by LRKK2 promotes the production and the nuclear translocation of the APP intracellular domain (AICD) which induces DA neuron apoptosis. Phosphorylation on Tyr-757 is required for SHC binding. Phosphorylated in the extracellular domain by casein kinases on both soluble and membrane-bound APP. This phosphorylation is inhibited by heparin. In terms of processing, N- and O-glycosylated. O-linkage of chondroitin sulfate to the L-APP isoforms produces the APP proteoglycan core proteins, the appicans. Extracellular binding and reduction of copper, results in a corresponding oxidation of Cys-144 and Cys-158, and the formation of a disulfide bond. Post-translationally, trophic-factor deprivation triggers the cleavage of surface APP by beta-secretase to release sAPP-beta which is further cleaved to release an N-terminal fragment of APP (N-APP). In terms of processing, amyloid-beta peptides are degraded by IDE. Sulfated on tyrosine residues. Isoform APP695 is the major isoform found in brain. The longer isoforms containing the BPTI domain are predominantly expressed in peripheral organs such as muscle and liver.

Its subcellular location is the cell membrane. The protein localises to the membrane. The protein resides in the perikaryon. It is found in the cell projection. It localises to the growth cone. Its subcellular location is the clathrin-coated pit. The protein localises to the early endosome. The protein resides in the cytoplasmic vesicle. It is found in the endoplasmic reticulum. It localises to the golgi apparatus. Its subcellular location is the secreted. The protein localises to the cell surface. The protein resides in the nucleus. It is found in the cytoplasm. Functionally, functions as a cell surface receptor and performs physiological functions on the surface of neurons relevant to neurite growth, neuronal adhesion and axonogenesis. Interaction between APP molecules on neighboring cells promotes synaptogenesis. Involved in cell mobility and transcription regulation through protein-protein interactions. Can promote transcription activation through binding to APBB1-KAT5 and inhibit Notch signaling through interaction with Numb. Couples to apoptosis-inducing pathways such as those mediated by G(o) and JIP. Inhibits G(o)-alpha ATPase activity. Acts as a kinesin I membrane receptor, mediating the axonal transport of beta-secretase and presenilin 1. By acting as a kinesin I membrane receptor, plays a role in axonal anterograde transport of cargo towards synapses in axons. May be involved in copper homeostasis/oxidative stress through copper ion reduction. In vitro, copper-metallated APP induces neuronal death directly or is potentiated through Cu(2+)-mediated low-density lipoprotein oxidation. Can regulate neurite outgrowth through binding to components of the extracellular matrix such as heparin and collagen I and IV. Induces a AGER-dependent pathway that involves activation of p38 MAPK, resulting in internalization of amyloid-beta peptide and mitochondrial dysfunction in cultured cortical neurons. Provides Cu(2+) ions for GPC1 which are required for release of nitric oxide (NO) and subsequent degradation of the heparan sulfate chains on GPC1. In terms of biological role, amyloid-beta peptides are lipophilic metal chelators with metal-reducing activity. Binds transient metals such as copper, zinc and iron. Amyloid-beta peptides bind to lipoproteins and apolipoproteins E and J in the CSF and to HDL particles in plasma, inhibiting metal-catalyzed oxidation of lipoproteins. Also bind GPC1 in lipid rafts. Its function is as follows. Appicans elicit adhesion of neural cells to the extracellular matrix and may regulate neurite outgrowth in the brain. The gamma-CTF peptides as well as the caspase-cleaved peptides, including C31, are potent enhancers of neuronal apoptosis. The chain is Amyloid-beta precursor protein from Cavia porcellus (Guinea pig).